The primary structure comprises 516 residues: Thiosulfate sulfurtransferase/rhodanese-like domain-containing protein 2 (516 aa).

Position 269 is a phosphoserine (Ser269). Residues 301-396 enclose the Rhodanese domain; sequence EQSDTILLDC…YLEEFPDGFY (96 aa). The active-site Cysteine persulfide intermediate is the Cys355. The disordered stretch occupies residues 490–516; the sequence is RELLQHVRQPVSPEPGPDAEEDGPVLV. Residues 506–516 show a composition bias toward acidic residues; sequence PDAEEDGPVLV.

This is Thiosulfate sulfurtransferase/rhodanese-like domain-containing protein 2 (TSTD2) from Pongo abelii (Sumatran orangutan).